The sequence spans 277 residues: Protein CIMAP1D (277 aa).

3 STPGR repeats span residues 122-148 (PGPG…LGSR), 202-227 (PGPG…ILGR), and 238-263 (PGPG…MGIR). The interval 181-277 (PSYTVVGRTP…ASTMVGDTKC (97 aa)) is disordered.

The protein belongs to the CIMAP family.

This Mus musculus (Mouse) protein is Protein CIMAP1D (Cimap1d).